Here is a 321-residue protein sequence, read N- to C-terminus: Anther-specific protein TA-29 (321 aa).

Residues 301-321 (RSDEEEAHHQSKQHKDEDIIN) form a disordered region.

In terms of tissue distribution, anther specific (tapetal cells).

The protein is Anther-specific protein TA-29 (TA-29) of Nicotiana tabacum (Common tobacco).